We begin with the raw amino-acid sequence, 337 residues long: Angiopoietin-related protein 7 (337 aa).

The first 21 residues, 1-21, serve as a signal peptide directing secretion; the sequence is MLRETWLCVILVAFVSHPVWL. A coiled-coil region spans residues 30–110; that stretch reads QLKAAGCCEE…DIMQLQAAQT (81 aa). Residue asparagine 49 is glycosylated (N-linked (GlcNAc...) asparagine). The Fibrinogen C-terminal domain maps to 113–334; the sequence is QTSADAIYDC…RVEMKIRPEA (222 aa). A disulfide bond links cysteine 122 and cysteine 153. 2 N-linked (GlcNAc...) asparagine glycosylation sites follow: asparagine 244 and asparagine 258. Cysteine 276 and cysteine 289 form a disulfide bridge. Asparagine 320 is a glycosylation site (N-linked (GlcNAc...) asparagine).

In terms of assembly, homotetramer; disulfide-linked.

The protein resides in the secreted. Functionally, has a role in the formation and organization of the extracellular matrix. In the eye, it functions as a mediator of dexamethasone-induced matrix deposition in the trabecular meshwork, the tissue responsible for the outflow of the ocular aqueous humor and for the maintenance of intraocular pressure. Is a negative regulator of angiogenesis in the cornea, and plays a major role in maintaining corneal avascularity and transparency. This Mus musculus (Mouse) protein is Angiopoietin-related protein 7 (Angptl7).